We begin with the raw amino-acid sequence, 35 residues long: Photosystem II reaction center protein T (35 aa).

A helical membrane pass occupies residues 3 to 23; sequence ALVYTFLLVSTLGIIFFAIFF.

It belongs to the PsbT family. PSII is composed of 1 copy each of membrane proteins PsbA, PsbB, PsbC, PsbD, PsbE, PsbF, PsbH, PsbI, PsbJ, PsbK, PsbL, PsbM, PsbT, PsbY, PsbZ, Psb30/Ycf12, at least 3 peripheral proteins of the oxygen-evolving complex and a large number of cofactors. It forms dimeric complexes.

Its subcellular location is the plastid. The protein resides in the chloroplast thylakoid membrane. In terms of biological role, found at the monomer-monomer interface of the photosystem II (PS II) dimer, plays a role in assembly and dimerization of PSII. PSII is a light-driven water plastoquinone oxidoreductase, using light energy to abstract electrons from H(2)O, generating a proton gradient subsequently used for ATP formation. The polypeptide is Photosystem II reaction center protein T (Stewartia pseudocamellia (Japanese stewartia)).